A 221-amino-acid chain; its full sequence is Chalcone--flavanone isomerase (221 aa).

Threonine 47, asparagine 112, and serine 189 together coordinate substrate.

The protein belongs to the chalcone isomerase family.

It carries out the reaction a chalcone = a flavanone.. The protein operates within secondary metabolite biosynthesis; flavonoid biosynthesis. Functionally, catalyzes the intramolecular cyclization of bicyclic chalcones into tricyclic (S)-flavanones. Responsible for the isomerization of 4,2',4',6'-tetrahydroxychalcone (also termed chalcone) into naringenin. The sequence is that of Chalcone--flavanone isomerase (CHI) from Dianthus caryophyllus (Carnation).